The following is a 97-amino-acid chain: Large ribosomal subunit protein bL28 (97 aa).

The protein belongs to the bacterial ribosomal protein bL28 family.

This is Large ribosomal subunit protein bL28 from Rickettsia rickettsii (strain Iowa).